Reading from the N-terminus, the 157-residue chain is uncharacterized protein (157 aa).

Residues 3 to 157 (FTLEDMTEEE…TNIRMRKQLC (155 aa)) enclose the N-acetyltransferase domain.

This sequence belongs to the acetyltransferase family.

This is an uncharacterized protein from Bacillus subtilis (strain 168).